Reading from the N-terminus, the 185-residue chain is Elongation factor P (185 aa).

It belongs to the elongation factor P family.

Its subcellular location is the cytoplasm. It functions in the pathway protein biosynthesis; polypeptide chain elongation. Involved in peptide bond synthesis. Stimulates efficient translation and peptide-bond synthesis on native or reconstituted 70S ribosomes in vitro. Probably functions indirectly by altering the affinity of the ribosome for aminoacyl-tRNA, thus increasing their reactivity as acceptors for peptidyl transferase. In Mesomycoplasma hyopneumoniae (strain J / ATCC 25934 / NCTC 10110) (Mycoplasma hyopneumoniae), this protein is Elongation factor P.